The following is a 156-amino-acid chain: Endoribonuclease YbeY (156 aa).

3 residues coordinate Zn(2+): His117, His121, and His127.

It belongs to the endoribonuclease YbeY family. Zn(2+) serves as cofactor.

The protein localises to the cytoplasm. Its function is as follows. Single strand-specific metallo-endoribonuclease involved in late-stage 70S ribosome quality control and in maturation of the 3' terminus of the 16S rRNA. The polypeptide is Endoribonuclease YbeY (Shewanella piezotolerans (strain WP3 / JCM 13877)).